Reading from the N-terminus, the 310-residue chain is Homoserine kinase (310 aa).

Residue 91–101 (PIGSGLGSSAC) participates in ATP binding.

The protein belongs to the GHMP kinase family. Homoserine kinase subfamily.

It localises to the cytoplasm. The enzyme catalyses L-homoserine + ATP = O-phospho-L-homoserine + ADP + H(+). It participates in amino-acid biosynthesis; L-threonine biosynthesis; L-threonine from L-aspartate: step 4/5. Catalyzes the ATP-dependent phosphorylation of L-homoserine to L-homoserine phosphate. This is Homoserine kinase from Escherichia coli (strain K12 / MC4100 / BW2952).